The chain runs to 139 residues: MRVMGLDVGSKTVGVAISDPLGFTAQGVEIIKINEEAKEFGFDRLGELVKEYQVDKFVVGLPKNMNNTEGPRVEASKAYGDKIKEIFNLPVDYQDERLTTVQAERMLVEQADVSRDKRKKVIDKLAAQLILQNYLDRMF.

This sequence belongs to the YqgF nuclease family.

It is found in the cytoplasm. Its function is as follows. Could be a nuclease involved in processing of the 5'-end of pre-16S rRNA. In Streptococcus thermophilus (strain ATCC BAA-491 / LMD-9), this protein is Putative pre-16S rRNA nuclease.